A 651-amino-acid chain; its full sequence is Cylicin-1 (651 aa).

Disordered regions lie at residues 110 to 241 (LKKA…CSEN) and 267 to 615 (NYSQ…CEPS). Composition is skewed to basic and acidic residues over residues 111–129 (KKAE…PLKK) and 146–173 (QIVE…EQSK). Over residues 186 to 195 (QNSKTVSKNC) the composition is skewed to polar residues. A compositionally biased stretch (basic and acidic residues) spans 196–205 (SQKDKKDSKN). Over residues 230–241 (SNDPISEICSEN) the composition is skewed to polar residues. The span at 271–281 (NNSKNYSLKYT) shows a compositional bias: low complexity. 8 tandem repeats follow at residues 278–305 (LKYT…DSKD), 306–342 (AKKD…DSKD), 343–379 (ERKD…DAKD), 380–417 (ARND…ESKE), 418–453 (SQKD…PKGD), 454–491 (SKKG…SDLE), 492–531 (LKKD…SKTG), and 532–553 (FKTS…YKPG). Basic and acidic residues-rich tracts occupy residues 284 to 308 (TKKD…DAKK), 318 to 331 (KKDD…KDTE), 338 to 368 (GDSK…KYPE), 375 to 402 (GDAK…DAKK), 413 to 441 (LESK…KNDE), and 448 to 482 (SEPK…KNAE). The span at 495-505 (DKKHSKEKKGS) shows a compositional bias: basic residues. Residues 506-518 (KKDIKKDARKDTE) are compositionally biased toward basic and acidic residues. A compositionally biased stretch (polar residues) spans 529–538 (KTGFKTSTKI). Positions 532 to 553 (FKTSTKIKGSDTESEESLYKPG) are 8 X approximate tandem repeats. The segment covering 587–607 (TFNEKGEKASTGRVPPSREKP) has biased composition (basic and acidic residues).

Interacts with proteins of spermatozoa head including ACTL7A, CCIN, FAM209A and SPACA1; the interactions may be necessary for proper acrosome attachment to the nuclear envelope. In terms of tissue distribution, testis.

Its subcellular location is the cytoplasm. The protein resides in the cytoskeleton. It is found in the perinuclear theca. It localises to the calyx. Its function is as follows. Plays a role in the establishment of normal sperm morphology during spermatogenesis and is required for acrosome attachment to the nuclear envelope. The protein is Cylicin-1 (CYLC1) of Homo sapiens (Human).